Consider the following 95-residue polypeptide: Aspartyl/glutamyl-tRNA(Asn/Gln) amidotransferase subunit C (95 aa).

Belongs to the GatC family. Heterotrimer of A, B and C subunits.

The catalysed reaction is L-glutamyl-tRNA(Gln) + L-glutamine + ATP + H2O = L-glutaminyl-tRNA(Gln) + L-glutamate + ADP + phosphate + H(+). It catalyses the reaction L-aspartyl-tRNA(Asn) + L-glutamine + ATP + H2O = L-asparaginyl-tRNA(Asn) + L-glutamate + ADP + phosphate + 2 H(+). Functionally, allows the formation of correctly charged Asn-tRNA(Asn) or Gln-tRNA(Gln) through the transamidation of misacylated Asp-tRNA(Asn) or Glu-tRNA(Gln) in organisms which lack either or both of asparaginyl-tRNA or glutaminyl-tRNA synthetases. The reaction takes place in the presence of glutamine and ATP through an activated phospho-Asp-tRNA(Asn) or phospho-Glu-tRNA(Gln). In Acetivibrio thermocellus (strain ATCC 27405 / DSM 1237 / JCM 9322 / NBRC 103400 / NCIMB 10682 / NRRL B-4536 / VPI 7372) (Clostridium thermocellum), this protein is Aspartyl/glutamyl-tRNA(Asn/Gln) amidotransferase subunit C.